We begin with the raw amino-acid sequence, 455 residues long: Mitochondrial distribution and morphology protein 10 (455 aa).

Disordered regions lie at residues 216 to 249 (WETT…EDAV), 278 to 311 (IRFS…PSPA), and 377 to 399 (PRSS…PLGE). Residues 217–227 (ETTNGENGTNT) show a composition bias toward low complexity. Polar residues predominate over residues 228–237 (SAPGNASNSR). Positions 291 to 301 (AQIPPPSPFTP) are enriched in pro residues.

The protein belongs to the MDM10 family. In terms of assembly, component of the ER-mitochondria encounter structure (ERMES) or MDM complex, composed of MMM1, MDM10, MDM12 and MDM34. Associates with the mitochondrial outer membrane sorting assembly machinery SAM(core) complex.

The protein resides in the mitochondrion outer membrane. In terms of biological role, component of the ERMES/MDM complex, which serves as a molecular tether to connect the endoplasmic reticulum and mitochondria. Components of this complex are involved in the control of mitochondrial shape and protein biogenesis and may function in phospholipid exchange. MDM10 is involved in the late assembly steps of the general translocase of the mitochondrial outer membrane (TOM complex). Functions in the TOM40-specific route of the assembly of outer membrane beta-barrel proteins, including the association of TOM40 with the receptor TOM22 and small TOM proteins. Can associate with the SAM(core) complex as well as the MDM12-MMM1 complex, both involved in late steps of the major beta-barrel assembly pathway, that is responsible for biogenesis of all outer membrane beta-barrel proteins. May act as a switch that shuttles between both complexes and channels precursor proteins into the TOM40-specific pathway. Plays a role in mitochondrial morphology and in the inheritance of mitochondria. This is Mitochondrial distribution and morphology protein 10 from Coprinopsis cinerea (strain Okayama-7 / 130 / ATCC MYA-4618 / FGSC 9003) (Inky cap fungus).